The primary structure comprises 325 residues: MAHFVQGTSRMIAAESSTEHKECAEPSTRKNLMNSLEQKIRCLEKQRKELLEVNQQWDQQFRSMKELYERKVAELKTKLDAAERFLSTREKDPHQRQRKDDRQREDDRQRDLTRDRLQREEKEKERLNEELHELKEENKLLKGKNTLANKEKEHYECEIKRLNKALQDALNIKCSFSEDCLRKSRVEFCHEEMRTEMEVLKQQVQIYEEDFKKERSDRERLNQEKEELQQINETSQSQLNRLNSQIKACQMEKEKLEKQLKQMYCPPCNCGLVFHLQDPWVPTGPGAVQKQREHPPDYQWYALDQLPPDVQHKANGLSSVKKVHP.

2 disordered regions span residues 1-30 (MAHFVQGTSRMIAAESSTEHKECAEPSTRK) and 84-129 (RFLS…RLNE). Over residues 17-28 (STEHKECAEPST) the composition is skewed to basic and acidic residues. Positions 27–265 (STRKNLMNSL…LEKQLKQMYC (239 aa)) form a coiled coil. A ubiquitin-binding domain (UBD) region spans residues 190-248 (HEEMRTEMEVLKQQVQIYEEDFKKERSDRERLNQEKEELQQINETSQSQLNRLNSQIKA).

As to quaternary structure, interacts with TNFAIP3. Interacts with polyubiquitin. In terms of tissue distribution, highly expressed in lung, lymph node, thymus and fetal liver. Expressed at lower levels in bone marrow, brain, kidney, spleen, leukocytes and tonsils. Could be detected in heart, salivary gland, adrenal gland, pancreas, ovary and fetal brain. High levels detected in liver, colon, small intestine, muscle, stomach, testis, placenta, thyroid, uterus, prostate, skin and PBL.

Its function is as follows. Binds to zinc finger protein TNFAIP3 and inhibits NF-kappa-B activation induced by tumor necrosis factor, Toll-like receptor 4 (TLR4), interleukin-1 and 12-O-tetradecanoylphorbol-13-acetate. Overexpression inhibits NF-kappa-B-dependent gene expression in response to lipopolysaccharide at a level downstream of TRAF6 and upstream of IKBKB. NF-kappa-B inhibition is independent of TNFAIP3 binding. The polypeptide is TNFAIP3-interacting protein 3 (Homo sapiens (Human)).